The following is a 99-amino-acid chain: Malonate decarboxylase acyl carrier protein (99 aa).

Ser25 carries the O-(phosphoribosyl dephospho-coenzyme A)serine modification.

The protein belongs to the MdcC family. In terms of processing, covalently binds the prosthetic group of malonate decarboxylase.

Its subcellular location is the cytoplasm. In terms of biological role, subunit of malonate decarboxylase, it is an acyl carrier protein to which acetyl and malonyl thioester residues are bound via a 2'-(5''-phosphoribosyl)-3'-dephospho-CoA prosthetic group and turn over during the catalytic mechanism. This Pseudomonas fluorescens (strain Pf0-1) protein is Malonate decarboxylase acyl carrier protein.